The chain runs to 835 residues: Phosphatidylinositol 4-kinase beta (835 aa).

3 disordered regions span residues 1 to 61 (MGDT…PLDV), 99 to 139 (SSAS…VRRR), and 267 to 341 (PSSQ…PVRL). Residues 19-59 (SPSTSTTSSLSLPSSPSSGPHPLTSSSPSTSEGLPTSSPPL) show a composition bias toward low complexity. One can recognise a PIK helical domain in the interval 59–262 (LDVISEGLGE…GTKLRKLILS (204 aa)). Composition is skewed to basic and acidic residues over residues 125–134 (ISEEEVEPIK) and 267–276 (PSSQRIRREV). The span at 277 to 288 (PQPPPPYPPPLH) shows a compositional bias: pro residues. Over residues 311–332 (DATVSISLSSNLKRTASNPKVE) the composition is skewed to polar residues. Positions 554–820 (EPWQEKVRRI…MVDGSMRSIT (267 aa)) constitute a PI3K/PI4K catalytic domain. The interval 560–566 (VRRIREG) is G-loop. A catalytic loop region spans residues 687 to 695 (QVKDRHNGN). The segment at 706-730 (HIDFGFILSSSPRNLGFETSAFKLT) is activation loop.

It belongs to the PI3/PI4-kinase family. Type III PI4K subfamily. It depends on Mg(2+) as a cofactor. Mn(2+) serves as cofactor. Expressed in the inner ear otic vesicles.

It localises to the endomembrane system. The protein localises to the mitochondrion outer membrane. Its subcellular location is the rough endoplasmic reticulum membrane. The enzyme catalyses a 1,2-diacyl-sn-glycero-3-phospho-(1D-myo-inositol) + ATP = a 1,2-diacyl-sn-glycero-3-phospho-(1D-myo-inositol 4-phosphate) + ADP + H(+). Phosphorylates phosphatidylinositol (PI) in the first committed step in the production of the second messenger inositol-1,4,5,-trisphosphate (PIP). May play an important role the in inner ear development. The sequence is that of Phosphatidylinositol 4-kinase beta (pi4kb) from Danio rerio (Zebrafish).